Consider the following 367-residue polypeptide: tRNA-specific 2-thiouridylase MnmA (367 aa).

ATP contacts are provided by residues 13–20 (GLSGGVDS) and Met39. The segment at 99-101 (NPD) is interaction with target base in tRNA. Cys104 serves as the catalytic Nucleophile. Cys104 and Cys200 are oxidised to a cystine. Residue Gly128 coordinates ATP. The segment at 150-152 (KDQ) is interaction with tRNA. Cys200 acts as the Cysteine persulfide intermediate in catalysis. The segment at 307–308 (RY) is interaction with tRNA.

It belongs to the MnmA/TRMU family.

Its subcellular location is the cytoplasm. It carries out the reaction S-sulfanyl-L-cysteinyl-[protein] + uridine(34) in tRNA + AH2 + ATP = 2-thiouridine(34) in tRNA + L-cysteinyl-[protein] + A + AMP + diphosphate + H(+). Its function is as follows. Catalyzes the 2-thiolation of uridine at the wobble position (U34) of tRNA, leading to the formation of s(2)U34. In Neisseria meningitidis serogroup C / serotype 2a (strain ATCC 700532 / DSM 15464 / FAM18), this protein is tRNA-specific 2-thiouridylase MnmA.